A 94-amino-acid polypeptide reads, in one-letter code: Large ribosomal subunit protein bL28 (94 aa).

The interval 1–21 (MARRCEVTGRGTVSGNNVSHS) is disordered. A compositionally biased stretch (polar residues) spans 11–20 (GTVSGNNVSH).

The protein belongs to the bacterial ribosomal protein bL28 family.

The sequence is that of Large ribosomal subunit protein bL28 from Leptospira borgpetersenii serovar Hardjo-bovis (strain JB197).